Consider the following 304-residue polypeptide: N-acetylmuramic acid 6-phosphate etherase (304 aa).

In terms of domain architecture, SIS spans 60-221 (GVSVLRHGGR…STAVMVRLGY (162 aa)). Glutamate 88 serves as the catalytic Proton donor. The active site involves glutamate 119.

This sequence belongs to the GCKR-like family. MurNAc-6-P etherase subfamily. Homodimer.

It carries out the reaction N-acetyl-D-muramate 6-phosphate + H2O = N-acetyl-D-glucosamine 6-phosphate + (R)-lactate. Its pathway is amino-sugar metabolism; N-acetylmuramate degradation. Specifically catalyzes the cleavage of the D-lactyl ether substituent of MurNAc 6-phosphate, producing GlcNAc 6-phosphate and D-lactate. The protein is N-acetylmuramic acid 6-phosphate etherase of Thermobifida fusca (strain YX).